A 95-amino-acid chain; its full sequence is Co-chaperonin GroES (95 aa).

It belongs to the GroES chaperonin family. As to quaternary structure, heptamer of 7 subunits arranged in a ring. Interacts with the chaperonin GroEL.

It localises to the cytoplasm. Its function is as follows. Together with the chaperonin GroEL, plays an essential role in assisting protein folding. The GroEL-GroES system forms a nano-cage that allows encapsulation of the non-native substrate proteins and provides a physical environment optimized to promote and accelerate protein folding. GroES binds to the apical surface of the GroEL ring, thereby capping the opening of the GroEL channel. The chain is Co-chaperonin GroES from Chlorobium phaeovibrioides (strain DSM 265 / 1930) (Prosthecochloris vibrioformis (strain DSM 265)).